Here is a 949-residue protein sequence, read N- to C-terminus: Coiled-coil domain-containing protein 80 (949 aa).

The N-terminal stretch at 1 to 22 is a signal peptide; it reads MMWKMGPHFTTLLAMWLVCGSA. 3 disordered regions span residues 24–79, 112–132, and 289–610; these read HSPA…RRKS, SSAR…MLRF, and HVVQ…PKKS. The segment covering 112–123 has biased composition (basic and acidic residues); that stretch reads SSAREMVRDEGS. The span at 295–307 shows a compositional bias: gly residues; it reads NEGGGGAGGTGLG. Residues 308 to 328 are compositionally biased toward basic and acidic residues; it reads GDKRKEDPRRTQVHPTREAPR. A compositionally biased stretch (low complexity) spans 345-380; sequence RATTLPPAPVTTATRATSRVVTIAARPTTTTAYPAT. The span at 419–429 shows a compositional bias: basic and acidic residues; sequence PRKEQQREKPQ. A compositionally biased stretch (polar residues) spans 436-445; it reads KATNYGSFTA. The segment covering 463–477 has biased composition (basic and acidic residues); it reads RFRDNRTDKREHGHQ. Asn467 carries N-linked (GlcNAc...) asparagine glycosylation. Residues 487 to 498 show a composition bias toward basic residues; sequence KPVKGKLPKKKD. 3 stretches are compositionally biased toward basic and acidic residues: residues 499–510, 534–548, and 556–581; these read RILSNEYEDKYD, KESK…PEKE, and AKQD…EKDK. Residues Lys544 and Lys547 each participate in a glycyl lysine isopeptide (Lys-Gly) (interchain with G-Cter in SUMO2) cross-link. A coiled-coil region spans residues 554-587; the sequence is KSAKQDKLLKSEKQAKKAEKKTKQEKDKNKKKKA.

It belongs to the CCDC80 family. Binds to various extracellular matrix proteins. In terms of processing, phosphorylated. Expressed in brain, stomach, colon, rectum, liver, lung, kidney, adipocytes and testis.

The protein resides in the secreted. Its subcellular location is the extracellular space. The protein localises to the extracellular matrix. Promotes cell adhesion and matrix assembly. The sequence is that of Coiled-coil domain-containing protein 80 (Ccdc80) from Mus musculus (Mouse).